A 460-amino-acid polypeptide reads, in one-letter code: MMGNQKLWGGRFEKGLEQWVEEFGASISFDYKLATFDIKASIAHVSMLGQQGIISKDEAELIKTGLEDIHRDILEEEIVFDSQDEDIHMTIERQLLAKIGPLAGKLHTARSRNDQVATDMHLYLKHILEALLEKLLQLRKVLVTLAEEHIETILPGYTHLQHAQPISFGHHLMAYYQMFTRDSERFKFNMKHTDMSPLGAAALAGTTFPIDRELTAQLLGFNELYHNSLDAVSDRDFIIEFLANASLLMMHMSRFCEEIILWTSYEYQFVSLSDSFSTGSSIMPQKKNPDMAELIRGKTGRVYGNLFSLLTVMKALPLAYNKDLQEDKEGLFDTAETILVAVDILAGMLSTMTVHKETMYRATQKDFSNATELADYLANKDMPFRQAHEIVGQLVLQASKEGIYLQDIPIKDFKAISPLIEEDIYDTLTSRAAVERRTSIGGTGFNQVSSQIALARKDLS.

The protein belongs to the lyase 1 family. Argininosuccinate lyase subfamily.

It is found in the cytoplasm. It catalyses the reaction 2-(N(omega)-L-arginino)succinate = fumarate + L-arginine. Its pathway is amino-acid biosynthesis; L-arginine biosynthesis; L-arginine from L-ornithine and carbamoyl phosphate: step 3/3. This chain is Argininosuccinate lyase, found in Streptococcus uberis (strain ATCC BAA-854 / 0140J).